The following is a 366-amino-acid chain: Erythronate-4-phosphate dehydrogenase (366 aa).

Positions 46 and 67 each coordinate substrate. Positions 147 and 175 each coordinate NAD(+). Arg-208 is a catalytic residue. Asp-228 lines the NAD(+) pocket. Glu-233 is a catalytic residue. The active-site Proton donor is the His-250. An NAD(+)-binding site is contributed by Gly-253. Residue Tyr-254 participates in substrate binding.

It belongs to the D-isomer specific 2-hydroxyacid dehydrogenase family. PdxB subfamily. In terms of assembly, homodimer.

The protein resides in the cytoplasm. It carries out the reaction 4-phospho-D-erythronate + NAD(+) = (R)-3-hydroxy-2-oxo-4-phosphooxybutanoate + NADH + H(+). It functions in the pathway cofactor biosynthesis; pyridoxine 5'-phosphate biosynthesis; pyridoxine 5'-phosphate from D-erythrose 4-phosphate: step 2/5. Its function is as follows. Catalyzes the oxidation of erythronate-4-phosphate to 3-hydroxy-2-oxo-4-phosphonooxybutanoate. The polypeptide is Erythronate-4-phosphate dehydrogenase (Coxiella burnetii (strain Dugway 5J108-111)).